Consider the following 190-residue polypeptide: dCTP deaminase (190 aa).

DCTP contacts are provided by residues 111-116 (KSTYAR), 135-137 (TLE), Gln-156, Tyr-172, and Gln-182. The active-site Proton donor/acceptor is the Glu-137.

This sequence belongs to the dCTP deaminase family. In terms of assembly, homotrimer.

The enzyme catalyses dCTP + H2O + H(+) = dUTP + NH4(+). Its pathway is pyrimidine metabolism; dUMP biosynthesis; dUMP from dCTP (dUTP route): step 1/2. In terms of biological role, catalyzes the deamination of dCTP to dUTP. This chain is dCTP deaminase, found in Stenotrophomonas maltophilia (strain R551-3).